Reading from the N-terminus, the 214-residue chain is Adenylate kinase (214 aa).

ATP is bound at residue 10–15 (GVGKGT). Residues 30-59 (STGDILRAAVKELTPMGAKAKGYMDSGALV) form an NMP region. AMP is bound by residues Thr31, Arg36, 57–59 (ALV), 85–88 (GFPR), and Gln92. Residues 126–163 (GRRACANCGAGYHVDFAPSKVAGVCDACSGQLVQREDD) are LID. Arg127 provides a ligand contact to ATP. Residues Cys130, Cys133, Cys150, and Cys153 each coordinate Zn(2+). AMP is bound by residues Arg160 and Arg171. Gly199 lines the ATP pocket.

This sequence belongs to the adenylate kinase family. Monomer.

It is found in the cytoplasm. The catalysed reaction is AMP + ATP = 2 ADP. The protein operates within purine metabolism; AMP biosynthesis via salvage pathway; AMP from ADP: step 1/1. Its function is as follows. Catalyzes the reversible transfer of the terminal phosphate group between ATP and AMP. Plays an important role in cellular energy homeostasis and in adenine nucleotide metabolism. The protein is Adenylate kinase of Geobacter sp. (strain M21).